The following is a 305-amino-acid chain: GMP synthase [glutamine-hydrolyzing] subunit B (305 aa).

The region spanning 2–184 (VDANAFIDEA…LPLPEEISER (183 aa)) is the GMPS ATP-PPase domain. 29–35 (SGGVDSS) is a binding site for ATP.

Heterodimer composed of a glutamine amidotransferase subunit (A) and a GMP-binding subunit (B).

It catalyses the reaction XMP + L-glutamine + ATP + H2O = GMP + L-glutamate + AMP + diphosphate + 2 H(+). It functions in the pathway purine metabolism; GMP biosynthesis; GMP from XMP (L-Gln route): step 1/1. Catalyzes the synthesis of GMP from XMP. The protein is GMP synthase [glutamine-hydrolyzing] subunit B of Methanocella arvoryzae (strain DSM 22066 / NBRC 105507 / MRE50).